Consider the following 258-residue polypeptide: Methanol--corrinoid protein (258 aa).

Residues 30 to 124 (AEELYPKDEL…NSGATPKTKG (95 aa)) enclose the B12-binding N-terminal domain. A B12-binding domain is found at 123-248 (KGTVVCHVAE…DAIIAGTTDV (126 aa)). Residue H136 coordinates methylcob(III)alamin.

This sequence belongs to the methylamine corrinoid protein family. As to quaternary structure, heterotetramer, composed of 2 MtaB and 2 MtaC subunits.

Functionally, harbors a corrinoid prosthetic group and acts as a methyl group carrier in methanogenesis in the methanol pathway. The methyl group of methanol is first transferred to the corrinoid prosthetic group of MtaC in the cob(I)amide oxidation state. This reaction is mediated by MtaB. The methyl group from MtaC is then transferred to coenzyme M by MtaA. This Methanosarcina barkeri (strain Fusaro / DSM 804) protein is Methanol--corrinoid protein (mtaC).